The chain runs to 760 residues: MTDSQDNRTPESPQGVDRKAEGGCPVLHDGVTAQGSESENPAIDSPTPRTGGRPNSLKDWWPNHLDLSVLHAHSSKSSPLDPGFRYSEEFEKLDIEALRRDIVEVLHTSQDWWPADFGHYGGLFVRMAWHAAGTYRIHDGRGGAGQGAQRFAPLNSWPDNANLDKARRLLWPVKQKHGQKISWADLIVFAGNVALEDMGFTTFGFGFGREDIWEPEEIYWGPEDTWLGDERYSGDRELSNPLGAVQMGLIYVNPEGPNGNPDPLASARDIRETFARMAMNDEETVALIAGGHTFGKTHGAGDADLVGPEPEAAPLEAQGLGWHSSFGSGKGEDTITSGIEVTWTYHPTRWDNEFFHILYAYEWELMKSAAGANQWRPKNGAGADMVPDAHDPSKRREPRMLTSDLALRFDPEYAKISSRFKDHPEEFALAFAKAWYKLLHRDLGPIARYLGPLVGETQIWQDPVPAVDHELVSDDDVAALKAKVLDSGLSVAELVSTAWASAASFRSTDKRGGANGARIRLEPQRSWAVNQPEQLAGVLDRLEGIQREFNEAGGAKISLADLIVLAGSAAVEKAAKDGGVDVTVPFRAGRTDASQEQTDVDSFAVLEPRADGFRNYLLENEKAQPEVLLVERAYLLGLTAPEMTVLVGGLRALGNNVGGSGHGVLTDRPGVLTNDFFANLLAPGAQWKASESEANVYEIRDLASGELRWTATAVDLIFGSNSQLRSLAEVYASADAREKFVRDFVAAWVKVMDADRFDLA.

A disordered region spans residues 1–57 (MTDSQDNRTPESPQGVDRKAEGGCPVLHDGVTAQGSESENPAIDSPTPRTGGRPNSL). A cross-link (tryptophyl-tyrosyl-methioninium (Trp-Tyr) (with M-277)) is located at residues 129-251 (WHAAGTYRIH…LGAVQMGLIY (123 aa)). The active-site Proton acceptor is the His130. The segment at residues 251–277 (YVNPEGPNGNPDPLASARDIRETFARM) is a cross-link (tryptophyl-tyrosyl-methioninium (Tyr-Met) (with W-129)). His292 lines the heme b pocket.

Belongs to the peroxidase family. Peroxidase/catalase subfamily. Homodimer or homotetramer. Heme b serves as cofactor. Post-translationally, formation of the three residue Trp-Tyr-Met cross-link is important for the catalase, but not the peroxidase activity of the enzyme.

It catalyses the reaction H2O2 + AH2 = A + 2 H2O. The catalysed reaction is 2 H2O2 = O2 + 2 H2O. Its function is as follows. Bifunctional enzyme with both catalase and broad-spectrum peroxidase activity. This Nocardioides sp. (strain ATCC BAA-499 / JS614) protein is Catalase-peroxidase.